The following is an 84-amino-acid chain: UPF0457 protein BT9727_2307 (84 aa).

This sequence belongs to the UPF0457 family.

This chain is UPF0457 protein BT9727_2307, found in Bacillus thuringiensis subsp. konkukian (strain 97-27).